The chain runs to 322 residues: Quinolinate synthase (322 aa).

2 residues coordinate iminosuccinate: His37 and Ser54. Cys99 serves as a coordination point for [4Fe-4S] cluster. Residues 125 to 127 and Ser142 contribute to the iminosuccinate site; that span reads YVN. Position 185 (Cys185) interacts with [4Fe-4S] cluster. Iminosuccinate is bound by residues 211 to 213 and Thr228; that span reads HPE. [4Fe-4S] cluster is bound at residue Cys278.

This sequence belongs to the quinolinate synthase family. Type 2 subfamily. The cofactor is [4Fe-4S] cluster.

Its subcellular location is the cytoplasm. The enzyme catalyses iminosuccinate + dihydroxyacetone phosphate = quinolinate + phosphate + 2 H2O + H(+). Its pathway is cofactor biosynthesis; NAD(+) biosynthesis; quinolinate from iminoaspartate: step 1/1. Functionally, catalyzes the condensation of iminoaspartate with dihydroxyacetone phosphate to form quinolinate. This is Quinolinate synthase from Chlorobaculum tepidum (strain ATCC 49652 / DSM 12025 / NBRC 103806 / TLS) (Chlorobium tepidum).